A 554-amino-acid chain; its full sequence is Glutamine--tRNA ligase (554 aa).

Positions 34–44 (PEPNGYLHIGH) match the 'HIGH' region motif. Residues 35 to 37 (EPN) and 41 to 47 (HIGHAKS) each bind ATP. The L-glutamine site is built by D67 and Y212. Residues T231, 261-262 (RL), and 269-271 (MSK) each bind ATP. The short motif at 268–272 (VMSKR) is the 'KMSKS' region element. The interval 317-324 (TKQDNTIE) is interaction with tRNA.

Belongs to the class-I aminoacyl-tRNA synthetase family. In terms of assembly, monomer.

It localises to the cytoplasm. The catalysed reaction is tRNA(Gln) + L-glutamine + ATP = L-glutaminyl-tRNA(Gln) + AMP + diphosphate. The sequence is that of Glutamine--tRNA ligase from Shigella boydii serotype 18 (strain CDC 3083-94 / BS512).